The following is a 124-amino-acid chain: Phosphoribosyl-AMP cyclohydrolase (124 aa).

D82 serves as a coordination point for Mg(2+). Residue C83 participates in Zn(2+) binding. Mg(2+)-binding residues include D84 and D86. Residues C99 and C106 each coordinate Zn(2+).

It belongs to the PRA-CH family. As to quaternary structure, homodimer. The cofactor is Mg(2+). Zn(2+) is required as a cofactor.

The protein resides in the cytoplasm. It catalyses the reaction 1-(5-phospho-beta-D-ribosyl)-5'-AMP + H2O = 1-(5-phospho-beta-D-ribosyl)-5-[(5-phospho-beta-D-ribosylamino)methylideneamino]imidazole-4-carboxamide. It functions in the pathway amino-acid biosynthesis; L-histidine biosynthesis; L-histidine from 5-phospho-alpha-D-ribose 1-diphosphate: step 3/9. Catalyzes the hydrolysis of the adenine ring of phosphoribosyl-AMP. This Zymomonas mobilis subsp. mobilis (strain ATCC 31821 / ZM4 / CP4) protein is Phosphoribosyl-AMP cyclohydrolase.